The following is a 182-amino-acid chain: Ribosome maturation factor RimM (182 aa).

The region spanning 103-182 is the PRC barrel domain; sequence EGDYYWKDLM…SIEVDWDPGF (80 aa).

Belongs to the RimM family. Binds ribosomal protein uS19.

It localises to the cytoplasm. An accessory protein needed during the final step in the assembly of 30S ribosomal subunit, possibly for assembly of the head region. Essential for efficient processing of 16S rRNA. May be needed both before and after RbfA during the maturation of 16S rRNA. It has affinity for free ribosomal 30S subunits but not for 70S ribosomes. This is Ribosome maturation factor RimM from Escherichia coli O139:H28 (strain E24377A / ETEC).